The sequence spans 336 residues: Fructose-1,6-bisphosphatase class 1 (336 aa).

Mg(2+) is bound by residues Glu-92, Asp-115, Leu-117, and Asp-118. Substrate is bound by residues Asp-118 to Ser-121, Asn-211, Tyr-244, Tyr-262 to Tyr-264, and Lys-274. Glu-280 is a binding site for Mg(2+).

Belongs to the FBPase class 1 family. In terms of assembly, homotetramer. The cofactor is Mg(2+).

Its subcellular location is the cytoplasm. It carries out the reaction beta-D-fructose 1,6-bisphosphate + H2O = beta-D-fructose 6-phosphate + phosphate. The protein operates within carbohydrate biosynthesis; gluconeogenesis. The protein is Fructose-1,6-bisphosphatase class 1 of Vibrio cholerae serotype O1 (strain ATCC 39315 / El Tor Inaba N16961).